Here is a 360-residue protein sequence, read N- to C-terminus: Phospho-N-acetylmuramoyl-pentapeptide-transferase (360 aa).

Helical transmembrane passes span 18–38 (VFSYLTFRAIVSLLTALFLSL), 72–92 (PTMGGIMILTSITVSVLMWAY), 94–114 (SNPYVWCVLFVLVGYGIVGFV), 132–152 (WKYFWQSVIALVVAFAMYAVG), 168–188 (IMPQLGLLYVLLAYFVIVGTS), 199–219 (GLAIMPTVFVAAGFALVAWAT), 236–256 (AGELVIVCTAIVGAGLGFLWF), 263–283 (VFMGDVGSLALGGALGTIAVL), 288–308 (FLLLIMGGVFVVETLSVILQV), and 338–358 (VIVRFWIISLMLVLIGLATLK).

Belongs to the glycosyltransferase 4 family. MraY subfamily. Mg(2+) is required as a cofactor.

The protein resides in the cell inner membrane. It carries out the reaction UDP-N-acetyl-alpha-D-muramoyl-L-alanyl-gamma-D-glutamyl-meso-2,6-diaminopimeloyl-D-alanyl-D-alanine + di-trans,octa-cis-undecaprenyl phosphate = di-trans,octa-cis-undecaprenyl diphospho-N-acetyl-alpha-D-muramoyl-L-alanyl-D-glutamyl-meso-2,6-diaminopimeloyl-D-alanyl-D-alanine + UMP. The protein operates within cell wall biogenesis; peptidoglycan biosynthesis. Its function is as follows. Catalyzes the initial step of the lipid cycle reactions in the biosynthesis of the cell wall peptidoglycan: transfers peptidoglycan precursor phospho-MurNAc-pentapeptide from UDP-MurNAc-pentapeptide onto the lipid carrier undecaprenyl phosphate, yielding undecaprenyl-pyrophosphoryl-MurNAc-pentapeptide, known as lipid I. The chain is Phospho-N-acetylmuramoyl-pentapeptide-transferase from Serratia proteamaculans (strain 568).